We begin with the raw amino-acid sequence, 478 residues long: Solute carrier family 2, facilitated glucose transporter member 8 (478 aa).

Positions 1–20 (MTPEDQEETQPLLRPPGGSA) are disordered. Residues 1 to 25 (MTPEDQEETQPLLRPPGGSAPRGRR) are Cytoplasmic-facing. Residues 11–20 (PLLRPPGGSA) are compositionally biased toward low complexity. A Dileucine internalization motif motif is present at residues 12–13 (LL). Residues 26-46 (VFLAAFAAALGPLSFGFALGY) form a helical membrane-spanning segment. The Extracellular portion of the chain corresponds to 47 to 70 (SSPAIPSLRRAAPPAPHLDEDAAS). The helical transmembrane segment at 71–91 (WFGAIVTLGAAAGGVLGGWLL) threads the bilayer. The Cytoplasmic segment spans residues 92–97 (DRAGRK). Residues 98 to 118 (LSLVLCALPFVAGFAVITAAQ) form a helical membrane-spanning segment. Residues 119 to 127 (NLWMLLGGR) are Extracellular-facing. The helical transmembrane segment at 128-148 (LLTGLACGIASLVAPVYISEI) threads the bilayer. Residues 149-158 (AYPEVRGLLG) are Cytoplasmic-facing. Residues 159–179 (SCVQLMVVTGILLAYLAGWVL) form a helical membrane-spanning segment. Residue Q162 participates in D-glucose binding. At 180-182 (EWR) the chain is on the extracellular side. Residues 183–203 (WLAVLGCVPPSFMLLLMCFMP) form a helical membrane-spanning segment. Over 204 to 257 (ETPRFLLSQHKHQEAMAAMQFLWGYAQGWEEPPLGAQHQDFHVAQLRRPGVYKP) the chain is Cytoplasmic. A helical membrane pass occupies residues 258 to 278 (FIIGISLMAFQQLSGVNAVMF). D-glucose-binding positions include 268–269 (QQ) and N274. Topologically, residues 279 to 293 (YAETIFEEAKFKDSS) are extracellular. A helical membrane pass occupies residues 294-314 (LASVVVGVIQVLFTATAALIM). The Cytoplasmic segment spans residues 315–320 (DRAGRR). The chain crosses the membrane as a helical span at residues 321 to 341 (LLLTLSGVVMVFSTSAFGTYF). Over 342–368 (KLTEGGPSNSSHVDLPALVSMEAADTN) the chain is Extracellular. N350 carries N-linked (GlcNAc...) asparagine glycosylation. Residues 369-389 (VGLAWLAVGSMCLFIAGFAVG) form a helical membrane-spanning segment. At 390–405 (WGPIPWLLMSEIFPLH) the chain is on the cytoplasmic side. W395 is a D-glucose binding site. The chain crosses the membrane as a helical span at residues 406-426 (VKGVATGVCVLTNWFMAFLVT). Residues 427 to 439 (KEFSSLMEVLRPY) are Extracellular-facing. A helical membrane pass occupies residues 440–460 (GAFWLASAFCIFGVLFTLACV). Residues 461–478 (PETKGKTLEQITAHFEGR) are Cytoplasmic-facing.

This sequence belongs to the major facilitator superfamily. Sugar transporter (TC 2.A.1.1) family. Glucose transporter subfamily. As to quaternary structure, interacts with AP2B1. Abundantly expressed in testis and more moderately in lung, kidney, spleen, intestine, skeletal muscle, liver and mammary gland.

It localises to the cell membrane. The protein localises to the cytoplasmic vesicle membrane. The catalysed reaction is D-glucose(out) = D-glucose(in). The enzyme catalyses D-fructose(out) = D-fructose(in). It carries out the reaction L-dehydroascorbate(out) = L-dehydroascorbate(in). It catalyses the reaction alpha,alpha-trehalose(in) = alpha,alpha-trehalose(out). With respect to regulation, inhibited by cytochalasin B. Its function is as follows. Insulin-regulated facilitative hexose transporter that mediates the transport of glucose and fructose. Facilitates hepatic influx of dietary trehalose, which in turn inhibits glucose and fructose influx triggering a starvation signal and hepatic autophagy through activation of AMPK and ULK1. Also able to mediate the transport of dehydroascorbate. The polypeptide is Solute carrier family 2, facilitated glucose transporter member 8 (Bos taurus (Bovine)).